Here is a 262-residue protein sequence, read N- to C-terminus: MSFLAIDIGNTRLKWGLYDAAKPGARLLAHGAVFLETIEQLAEQDWARLPHPTAMLGCAVAGDAVRRRTEEQLELWDLTPHWVVSQPVGGGIVNGYDHPSRLGSDRWVAMVGARERILEQTGPGARPVPAIVVMVGTAVTVDAVDPDGCFIGGLILPGFGLMLKALEMGTAGLRVPTGDVCEFPTNTSDALMSGGACGIAGAIERMHRQLQQRCGVAPRILMSGGAATKLAQIMALPVEVVDTLVFDGLLRLASDRVAAGLA.

ATP is bound at residue 7–14 (DIGNTRLK). Substrate is bound by residues tyrosine 96 and 103-106 (GSDR). The active-site Proton acceptor is the aspartate 105. Threonine 137 is an ATP binding site. Threonine 187 contacts substrate.

The protein belongs to the type III pantothenate kinase family. Homodimer. Requires NH4(+) as cofactor. K(+) serves as cofactor.

It localises to the cytoplasm. It catalyses the reaction (R)-pantothenate + ATP = (R)-4'-phosphopantothenate + ADP + H(+). Its pathway is cofactor biosynthesis; coenzyme A biosynthesis; CoA from (R)-pantothenate: step 1/5. Its function is as follows. Catalyzes the phosphorylation of pantothenate (Pan), the first step in CoA biosynthesis. In Leptothrix cholodnii (strain ATCC 51168 / LMG 8142 / SP-6) (Leptothrix discophora (strain SP-6)), this protein is Type III pantothenate kinase.